The following is a 119-amino-acid chain: Ribosome-binding factor A (119 aa).

This sequence belongs to the RbfA family. As to quaternary structure, monomer. Binds 30S ribosomal subunits, but not 50S ribosomal subunits or 70S ribosomes.

The protein localises to the cytoplasm. Functionally, one of several proteins that assist in the late maturation steps of the functional core of the 30S ribosomal subunit. Associates with free 30S ribosomal subunits (but not with 30S subunits that are part of 70S ribosomes or polysomes). Required for efficient processing of 16S rRNA. May interact with the 5'-terminal helix region of 16S rRNA. The sequence is that of Ribosome-binding factor A from Wolinella succinogenes (strain ATCC 29543 / DSM 1740 / CCUG 13145 / JCM 31913 / LMG 7466 / NCTC 11488 / FDC 602W) (Vibrio succinogenes).